The chain runs to 308 residues: UDP-N-acetylenolpyruvoylglucosamine reductase (308 aa).

The FAD-binding PCMH-type domain maps to Arg-37–Gly-201. Arg-181 is a catalytic residue. The span at Ser-216–Lys-233 shows a compositional bias: polar residues. The interval Ser-216–Pro-236 is disordered. Residue Ser-230 is the Proton donor of the active site. Glu-300 is a catalytic residue.

The protein belongs to the MurB family. FAD is required as a cofactor.

Its subcellular location is the cytoplasm. The enzyme catalyses UDP-N-acetyl-alpha-D-muramate + NADP(+) = UDP-N-acetyl-3-O-(1-carboxyvinyl)-alpha-D-glucosamine + NADPH + H(+). It functions in the pathway cell wall biogenesis; peptidoglycan biosynthesis. Cell wall formation. This chain is UDP-N-acetylenolpyruvoylglucosamine reductase, found in Azorhizobium caulinodans (strain ATCC 43989 / DSM 5975 / JCM 20966 / LMG 6465 / NBRC 14845 / NCIMB 13405 / ORS 571).